The chain runs to 539 residues: Inositol 1,4,5-triphosphate receptor associated 2 (539 aa).

Disordered regions lie at residues methionine 1–arginine 21, tyrosine 69–alanine 98, and alanine 147–proline 171. Residues methionine 1–arginine 479 are Cytoplasmic-facing. Over residues serine 74–serine 92 the composition is skewed to low complexity. Phosphothreonine is present on threonine 78. A coiled-coil region spans residues methionine 298–asparagine 326. The segment at proline 334–serine 353 is disordered. Residues serine 347, serine 354, and serine 408 each carry the phosphoserine modification. Residues glutamate 418–serine 449 are disordered. A compositionally biased stretch (basic and acidic residues) spans alanine 435–serine 449. A helical; Anchor for type IV membrane protein membrane pass occupies residues alanine 480–glycine 500. Residues glutamine 501–valine 539 lie on the Lumenal side of the membrane.

This sequence belongs to the IRAG2 family. In terms of assembly, interacts (via coiled-coil domain) with ITPR3. Interacts with SUN1 and SUN2. Interacts with microtubules. Interacts with HCN4; regulates HCN4 channel activity. The removal of the C-terminal lumenal domain occurs by proteolytic processing. Spleen and thymus. Expressed at high levels in pre B-cells, mature B-cells and pre T-cells. Expressed at low levels in mature T-cells and plasma B-cells. Expressed in circumvallate (CV), foliate (FL) and fungiform (FF) taste papillae cells of the tongue epithelium.

It localises to the cytoplasm. The protein resides in the endoplasmic reticulum membrane. The protein localises to the nucleus envelope. It is found in the cytoskeleton. Its subcellular location is the microtubule organizing center. It localises to the centrosome. The protein resides in the spindle pole. The protein localises to the chromosome. Functionally, plays a role in the delivery of peptides to major histocompatibility complex (MHC) class I molecules; this occurs in a transporter associated with antigen processing (TAP)-independent manner. May play a role in taste signal transduction via ITPR3. May play a role during fertilization in pronucleus congression and fusion. Plays a role in maintaining nuclear shape, maybe as a component of the LINC complex and through interaction with microtubules. Plays a role in the regulation of cellular excitability by regulating the hyperpolarization-activated cyclic nucleotide-gated HCN4 channel activity. This Mus musculus (Mouse) protein is Inositol 1,4,5-triphosphate receptor associated 2 (Irag2).